The sequence spans 540 residues: Cytochrome P450 monooxygenase ORF5 (540 aa).

A helical transmembrane segment spans residues 48-68 (YHALGTAIALFACACAYALVA). Residues Asn376 and Asn460 are each glycosylated (N-linked (GlcNAc...) asparagine). Cys483 contributes to the heme binding site.

It belongs to the cytochrome P450 family. Requires heme as cofactor.

It is found in the membrane. It functions in the pathway sesquiterpene biosynthesis. Functionally, cytochrome P450 monooxygenase; part of the gene cluster that mediates the biosynthesis of PR-toxin, a bicyclic sesquiterpene belonging to the eremophilane class and acting as a mycotoxin. The first step of the pathway is catalyzed by the aristolochene synthase which performs the cyclization of trans,trans-farnesyl diphosphate (FPP) to the bicyclic sesquiterpene aristolochene. Following the formation of aristolochene, the non-oxygenated aristolochene is converted to the trioxygenated intermediate eremofortin B, via 7-epi-neopetasone. This conversion appears to involve three enzymes, a hydroxysterol oxidase-like enzyme, the quinone-oxidase prx3 that forms the quinone-type-structure in the bicyclic nucleus of aristolochene with the C8-oxo group and the C-3 hydroxyl group, and the P450 monooxygenase ORF6 that introduces the epoxide at the double bond between carbons 1 and 2. No monoxy or dioxy-intermediates have been reported to be released to the broth, so these three early oxidative reactions may be coupled together. Eremofortin B is further oxidized by another P450 monooxygenase, that introduces a second epoxide between carbons 7 and 11 prior to acetylation to eremofortin A by the acetyltransferase ORF8. The second epoxidation may be performed by a second P450 monooxygenase. After the acetylation step, eremofortin A is converted to eremofortin C and then to PR-toxin. First the conversion of eremofortin A to eremofortin C proceeds by oxidation of the side chain of the molecule at C-12 and is catalyzed by the short-chain oxidoreductase prx1. The cytochrome P450 monooxygenase ORF6 is probably also involved in this step. The primary alcohol formed at C-12 is finally oxidized by the short-chain alcohol dehydrogenase prx4 that forms PR-toxin. This Penicillium roqueforti (strain FM164) protein is Cytochrome P450 monooxygenase ORF5.